The chain runs to 431 residues: tRNA(Ile)-lysidine synthase (431 aa).

26 to 31 (SGGVDS) lines the ATP pocket.

It belongs to the tRNA(Ile)-lysidine synthase family.

The protein resides in the cytoplasm. The enzyme catalyses cytidine(34) in tRNA(Ile2) + L-lysine + ATP = lysidine(34) in tRNA(Ile2) + AMP + diphosphate + H(+). Functionally, ligates lysine onto the cytidine present at position 34 of the AUA codon-specific tRNA(Ile) that contains the anticodon CAU, in an ATP-dependent manner. Cytidine is converted to lysidine, thus changing the amino acid specificity of the tRNA from methionine to isoleucine. This Wolbachia pipientis wMel protein is tRNA(Ile)-lysidine synthase.